The sequence spans 1319 residues: Girdin homolog (1319 aa).

In terms of domain architecture, Calponin-homology (CH) spans 6 to 118 (ENWSHPLAFW…KLLLLLLGCA (113 aa)). Coiled coils occupy residues 141–173 (ELAA…TDEV), 218–690 (TSEL…ADLI), and 732–1096 (KRER…KKST). The tract at residues 166–222 (KMKETDEVGGGGGSIEDVDSDDMESSTTSSSNGEIAIKQQDQSFLMSRSTSPTSELR) is disordered. Over residues 204–222 (QQDQSFLMSRSTSPTSELR) the composition is skewed to polar residues. Disordered stretches follow at residues 1112-1236 (INRR…SPAH) and 1289-1308 (NVNL…LKPN). Residues 1118–1131 (TSNGGSTTEDSSVY) are compositionally biased toward polar residues.

Belongs to the CCDC88 family. In terms of tissue distribution, expressed in AQR and PQR gas-sensing neurons in hermaphrodites (at protein level).

Its subcellular location is the cytoplasm. The protein resides in the cytoskeleton. It localises to the cilium basal body. The protein localises to the microtubule organizing center. It is found in the centrosome. Its subcellular location is the centriole. Its function is as follows. Scaffolding protein that plays a role in ciliogenesis, cilium positioning and dendrite anchoring in sensory amphid neurons including AWB, AWA, AWC, ADL and ASI, the phasmid neurons PHA and PHB and the gas sensing neurons AQR, PQR, URX and BAG. Its role in cilium positioning may be through regulation of the localization of cell adhesion proteins such as the apical junction protein ajm-1, and the ciliary scaffolding protein Rootletin/che-10. Plays a more prominent role in regulating dendrite morphogenesis in AQR than in PQR neurons. Regulates localization of hmr-1 to the distal AQR dendrite. During embryonic elongation, required for the anchoring of URX and BAG dendrites to the presumptive nose. The sequence is that of Girdin homolog from Caenorhabditis elegans.